The sequence spans 138 residues: ATP synthase epsilon chain (138 aa).

This sequence belongs to the ATPase epsilon chain family. As to quaternary structure, F-type ATPases have 2 components, CF(1) - the catalytic core - and CF(0) - the membrane proton channel. CF(1) has five subunits: alpha(3), beta(3), gamma(1), delta(1), epsilon(1). CF(0) has four main subunits: a(1), b(1), b'(1) and c(9-12).

It is found in the cellular thylakoid membrane. In terms of biological role, produces ATP from ADP in the presence of a proton gradient across the membrane. The complex from the organism is particularly stable to disruption and remains functional after 6 hours at 55 degrees Celsius. In Thermosynechococcus vestitus (strain NIES-2133 / IAM M-273 / BP-1), this protein is ATP synthase epsilon chain.